The following is a 431-amino-acid chain: Adenylosuccinate synthetase (431 aa).

GTP-binding positions include 13 to 19 and 41 to 43; these read GDEGKGK and GHT. Catalysis depends on D14, which acts as the Proton acceptor. Residues D14 and G41 each contribute to the Mg(2+) site. IMP contacts are provided by residues 14–17, 39–42, T130, R144, Q225, T240, and R304; these read DEGK and NAGH. The active-site Proton donor is the H42. Residue 300–306 coordinates substrate; it reads ATTGRKR. GTP is bound by residues R306, 332–334, and 415–417; these read KLD and STG.

The protein belongs to the adenylosuccinate synthetase family. In terms of assembly, homodimer. Mg(2+) is required as a cofactor.

It localises to the cytoplasm. The enzyme catalyses IMP + L-aspartate + GTP = N(6)-(1,2-dicarboxyethyl)-AMP + GDP + phosphate + 2 H(+). Its pathway is purine metabolism; AMP biosynthesis via de novo pathway; AMP from IMP: step 1/2. In terms of biological role, plays an important role in the de novo pathway of purine nucleotide biosynthesis. Catalyzes the first committed step in the biosynthesis of AMP from IMP. In Shewanella denitrificans (strain OS217 / ATCC BAA-1090 / DSM 15013), this protein is Adenylosuccinate synthetase.